Consider the following 202-residue polypeptide: Prohormone-4 (202 aa).

Positions 1-28 are cleaved as a signal peptide; the sequence is MVQRLCTSVAALSLALSACVFFPRAVMA. Residues 46 to 86 enclose the LDL-receptor class A domain; sequence ACRPYEPFKCPGDDTCISIQYLCDGAPDCQDGYDEDSRLCT. 3 disulfides stabilise this stretch: cysteine 47-cysteine 61, cysteine 55-cysteine 74, and cysteine 68-cysteine 85.

The protein resides in the secreted. The chain is Prohormone-4 from Apis mellifera (Honeybee).